A 134-amino-acid chain; its full sequence is Profilin (134 aa).

The protein belongs to the profilin family. As to quaternary structure, occurs in many kinds of cells as a complex with monomeric actin in a 1:1 ratio.

It localises to the cytoplasm. The protein localises to the cytoskeleton. Functionally, binds to actin and affects the structure of the cytoskeleton. At high concentrations, profilin prevents the polymerization of actin, whereas it enhances it at low concentrations. By binding to PIP2, it inhibits the formation of IP3 and DG. The protein is Profilin of Brassica napus (Rape).